The primary structure comprises 199 residues: HTH-type transcriptional repressor NemR (199 aa).

Positions 7–67 (HDTREHLLAT…AMLERHYAAY (61 aa)) constitute an HTH tetR-type domain. The H-T-H motif DNA-binding region spans 30–49 (GLSELLKTAEVPKGSFYHYF).

In terms of biological role, involved in response to both electrophiles and reactive chlorine species (RCS). Represses the transcription of the nemRA-gloA operon by binding to the NemR box. This Escherichia coli O6:H1 (strain CFT073 / ATCC 700928 / UPEC) protein is HTH-type transcriptional repressor NemR (nemR).